Here is a 255-residue protein sequence, read N- to C-terminus: 14-3-3-like protein GF14 psi (255 aa).

Serine 66 is modified (phosphoserine). The residue at position 162 (threonine 162) is a Phosphothreonine. Serine 189 is modified (phosphoserine). Phosphothreonine is present on residues threonine 210 and threonine 238.

This sequence belongs to the 14-3-3 family. Component of a DNA binding complex that binds to the G box. Interacts with IDH3, AGT3, GLN1-1, GLN1-2, GLN1-4, SAM1, SAM2, MDH1, METK3 and MDH2. Binds to 1-aminocyclopropane-1-carboxylate synthases (ACS) such as ACS2, ACS5, ACS6, ACS8, and ACS11. Interacts with FD. Interacts with DREB1A and DREB1B in the nucleus. Interacts with CINV1.

It is found in the cytoplasm. The protein localises to the nucleus. Functionally, is associated with a DNA binding complex that binds to the G box, a well-characterized cis-acting DNA regulatory element found in plant genes. Involved in the regulation of nutrient metabolism. Reciprocal negative transcription regulation of miR396. Negative regulator of constitutive freezing tolerance and cold acclimation by controlling cold-induced gene expression partially through an ethylene (ET)-dependent pathway; prevents ethylene (ET) biosynthesis, probably by binding 1-aminocyclopropane-1-carboxylate synthases (ACS) to reduce their stability, thus contributing to establish adequate ET levels under both standard and low-temperature conditions. The protein is 14-3-3-like protein GF14 psi of Arabidopsis thaliana (Mouse-ear cress).